We begin with the raw amino-acid sequence, 1331 residues long: Lysine-specific demethylase 3A-A (1331 aa).

3 disordered regions span residues 243 to 280 (LNDKSRKPRAPKRKSQDTESEDQTELKQTRNEEVPSKD), 358 to 381 (TPPQANSPPSFGAATPQGKGTQNL), and 497 to 532 (KVVKKPENNHTSVRAIKPQEPPYPKSPNKNDGVTYP). The segment covering 266–280 (TELKQTRNEEVPSKD) has biased composition (basic and acidic residues). The segment at 683–708 (CDACDTTIFNLHWVCPKCGFGVCVDC) adopts a C6-type zinc-finger fold. The short motif at 894 to 898 (LRNLL) is the LXXLL motif element. Residues 1086–1291 (RREGKLNLAA…HCFWLTQEFR (206 aa)) enclose the JmjC domain. Fe cation is bound by residues H1130, D1132, and H1259.

The protein belongs to the JHDM2 histone demethylase family. The cofactor is Fe(2+).

The protein localises to the cytoplasm. The protein resides in the nucleus. The catalysed reaction is N(6),N(6)-dimethyl-L-lysyl(9)-[histone H3] + 2 2-oxoglutarate + 2 O2 = L-lysyl(9)-[histone H3] + 2 formaldehyde + 2 succinate + 2 CO2. In terms of biological role, histone demethylase that specifically demethylates 'Lys-9' of histone H3, thereby playing a central role in histone code. Preferentially demethylates mono- and dimethylated H3 'Lys-9' residue, with a preference for dimethylated residue, while it has weak or no activity on trimethylated H3 'Lys-9'. Demethylation of Lys residue generates formaldehyde and succinate. The sequence is that of Lysine-specific demethylase 3A-A (kdm3a-a) from Xenopus laevis (African clawed frog).